The sequence spans 417 residues: Serpin H1 (417 aa).

The N-terminal stretch at 1 to 17 (MRSLLLGTLCLLAVALA) is a signal peptide. Lys-93 carries the N6-succinyllysine modification. N-linked (GlcNAc...) asparagine glycosylation is found at Asn-119 and Asn-124. Ser-140 is modified (phosphoserine). Lys-206 is modified (N6-acetyllysine). Lys-295 carries the post-translational modification N6-succinyllysine. Residue Lys-318 is modified to N6-acetyllysine. N-linked (GlcNAc...) asparagine glycosylation occurs at Asn-394. A Prevents secretion from ER motif is present at residues 414 to 417 (RDEL).

It belongs to the serpin family.

The protein resides in the endoplasmic reticulum lumen. Its function is as follows. Binds specifically to collagen. Could be involved as a chaperone in the biosynthetic pathway of collagen. The polypeptide is Serpin H1 (Serpinh1) (Rattus norvegicus (Rat)).